The chain runs to 349 residues: 4-hydroxy-3-methylbut-2-en-1-yl diphosphate synthase (flavodoxin) (349 aa).

The [4Fe-4S] cluster site is built by C264, C267, C299, and E306.

It belongs to the IspG family. [4Fe-4S] cluster is required as a cofactor.

The enzyme catalyses (2E)-4-hydroxy-3-methylbut-2-enyl diphosphate + oxidized [flavodoxin] + H2O + 2 H(+) = 2-C-methyl-D-erythritol 2,4-cyclic diphosphate + reduced [flavodoxin]. Its pathway is isoprenoid biosynthesis; isopentenyl diphosphate biosynthesis via DXP pathway; isopentenyl diphosphate from 1-deoxy-D-xylulose 5-phosphate: step 5/6. In terms of biological role, converts 2C-methyl-D-erythritol 2,4-cyclodiphosphate (ME-2,4cPP) into 1-hydroxy-2-methyl-2-(E)-butenyl 4-diphosphate. This chain is 4-hydroxy-3-methylbut-2-en-1-yl diphosphate synthase (flavodoxin), found in Clostridium acetobutylicum (strain ATCC 824 / DSM 792 / JCM 1419 / IAM 19013 / LMG 5710 / NBRC 13948 / NRRL B-527 / VKM B-1787 / 2291 / W).